An 88-amino-acid chain; its full sequence is Small ribosomal subunit protein uS17 (88 aa).

This sequence belongs to the universal ribosomal protein uS17 family. Part of the 30S ribosomal subunit.

One of the primary rRNA binding proteins, it binds specifically to the 5'-end of 16S ribosomal RNA. The chain is Small ribosomal subunit protein uS17 from Prochlorococcus marinus (strain MIT 9303).